The chain runs to 176 residues: Isopentenyl-diphosphate Delta-isomerase (176 aa).

2 residues coordinate Mn(2+): H22 and H28. A Nudix hydrolase domain is found at 26–160 (LRHKAISVFI…PETFTPWLHI (135 aa)). C62 is a catalytic residue. H64 serves as a coordination point for Mn(2+). E82 contacts Mg(2+). The Mn(2+) site is built by E108 and E110. The active site involves E110.

This sequence belongs to the IPP isomerase type 1 family. Mg(2+) serves as cofactor. It depends on Mn(2+) as a cofactor.

Its subcellular location is the cytoplasm. The enzyme catalyses isopentenyl diphosphate = dimethylallyl diphosphate. Its pathway is isoprenoid biosynthesis; dimethylallyl diphosphate biosynthesis; dimethylallyl diphosphate from isopentenyl diphosphate: step 1/1. It participates in porphyrin-containing compound metabolism; chlorophyll biosynthesis. Catalyzes the 1,3-allylic rearrangement of the homoallylic substrate isopentenyl (IPP) to its highly electrophilic allylic isomer, dimethylallyl diphosphate (DMAPP). The sequence is that of Isopentenyl-diphosphate Delta-isomerase from Jannaschia sp. (strain CCS1).